Consider the following 333-residue polypeptide: T-cell surface glycoprotein CD1b-1 (333 aa).

The signal sequence occupies residues Met-1–Asn-18. Topologically, residues Glu-19 to Gly-302 are extracellular. N-linked (GlcNAc...) asparagine glycans are attached at residues Asn-38, Asn-75, Asn-146, and Asn-258. Intrachain disulfides connect Cys-120/Cys-184 and Cys-224/Cys-279. The 111-residue stretch at Pro-185–Trp-295 folds into the Ig-like domain. Residues Leu-303–Phe-323 form a helical membrane-spanning segment. Residues Trp-324–Leu-333 lie on the Cytoplasmic side of the membrane. The Internalization signal signature appears at Tyr-329–Ile-332.

As to quaternary structure, heterodimer with B2M (beta-2-microglobulin). Interacts with saposin C.

The protein localises to the cell membrane. It localises to the endosome membrane. The protein resides in the lysosome membrane. In terms of biological role, antigen-presenting protein that binds self and non-self lipid and glycolipid antigens and presents them to T-cell receptors on natural killer T-cells. The protein is T-cell surface glycoprotein CD1b-1 of Ovis aries (Sheep).